Here is a 367-residue protein sequence, read N- to C-terminus: tRNA-specific 2-thiouridylase MnmA (367 aa).

ATP contacts are provided by residues 13–20 (GLSGGVDS) and Met-39. The interaction with target base in tRNA stretch occupies residues 99–101 (NPD). The active-site Nucleophile is the Cys-104. A disulfide bridge connects residues Cys-104 and Cys-200. Gly-128 contacts ATP. Residues 150 to 152 (KDQ) are interaction with tRNA. Cys-200 serves as the catalytic Cysteine persulfide intermediate. Residues 307-308 (RY) form an interaction with tRNA region.

This sequence belongs to the MnmA/TRMU family.

It is found in the cytoplasm. The catalysed reaction is S-sulfanyl-L-cysteinyl-[protein] + uridine(34) in tRNA + AH2 + ATP = 2-thiouridine(34) in tRNA + L-cysteinyl-[protein] + A + AMP + diphosphate + H(+). In terms of biological role, catalyzes the 2-thiolation of uridine at the wobble position (U34) of tRNA, leading to the formation of s(2)U34. The chain is tRNA-specific 2-thiouridylase MnmA from Neisseria gonorrhoeae (strain ATCC 700825 / FA 1090).